The chain runs to 376 residues: Lipoyl synthase 1, mitochondrial (376 aa).

Residues cysteine 109, cysteine 114, cysteine 120, cysteine 140, cysteine 144, cysteine 147, and serine 356 each contribute to the [4Fe-4S] cluster site. Positions 125–345 constitute a Radical SAM core domain; sequence ETGTATATIM…QTLGMEMGFR (221 aa).

The protein belongs to the radical SAM superfamily. Lipoyl synthase family. [4Fe-4S] cluster serves as cofactor.

The protein localises to the mitochondrion. The enzyme catalyses [[Fe-S] cluster scaffold protein carrying a second [4Fe-4S](2+) cluster] + N(6)-octanoyl-L-lysyl-[protein] + 2 oxidized [2Fe-2S]-[ferredoxin] + 2 S-adenosyl-L-methionine + 4 H(+) = [[Fe-S] cluster scaffold protein] + N(6)-[(R)-dihydrolipoyl]-L-lysyl-[protein] + 4 Fe(3+) + 2 hydrogen sulfide + 2 5'-deoxyadenosine + 2 L-methionine + 2 reduced [2Fe-2S]-[ferredoxin]. It functions in the pathway protein modification; protein lipoylation via endogenous pathway; protein N(6)-(lipoyl)lysine from octanoyl-[acyl-carrier-protein]: step 2/2. Catalyzes the radical-mediated insertion of two sulfur atoms into the C-6 and C-8 positions of the octanoyl moiety bound to the lipoyl domains of lipoate-dependent enzymes, thereby converting the octanoylated domains into lipoylated derivatives. The polypeptide is Lipoyl synthase 1, mitochondrial (Pisum sativum (Garden pea)).